Consider the following 122-residue polypeptide: Small ribosomal subunit protein uS13 (122 aa).

The interval 98 to 122 (VRGQRTHTNARTRKGPAKAIAGKKK) is disordered.

The protein belongs to the universal ribosomal protein uS13 family. Part of the 30S ribosomal subunit. Forms a loose heterodimer with protein S19. Forms two bridges to the 50S subunit in the 70S ribosome.

In terms of biological role, located at the top of the head of the 30S subunit, it contacts several helices of the 16S rRNA. In the 70S ribosome it contacts the 23S rRNA (bridge B1a) and protein L5 of the 50S subunit (bridge B1b), connecting the 2 subunits; these bridges are implicated in subunit movement. Contacts the tRNAs in the A and P-sites. This is Small ribosomal subunit protein uS13 from Roseobacter denitrificans (strain ATCC 33942 / OCh 114) (Erythrobacter sp. (strain OCh 114)).